Reading from the N-terminus, the 505-residue chain is Putative diacyglycerol O-acyltransferase MT0919 (505 aa).

H167 serves as the catalytic Proton acceptor.

The protein belongs to the long-chain O-acyltransferase family.

It carries out the reaction an acyl-CoA + a 1,2-diacyl-sn-glycerol = a triacyl-sn-glycerol + CoA. The protein operates within glycerolipid metabolism; triacylglycerol biosynthesis. This Mycobacterium tuberculosis (strain CDC 1551 / Oshkosh) protein is Putative diacyglycerol O-acyltransferase MT0919.